A 204-amino-acid polypeptide reads, in one-letter code: Protein FAM167A (204 aa).

Positions 58-80 are disordered; sequence GLAVSDGSTELEKDAGLKPRATP. Positions 113–146 form a coiled coil; that stretch reads LRKELMEMRIQDQQLARQLMRLRGDINKLKVEQT.

This sequence belongs to the FAM167 (SEC) family.

In Danio rerio (Zebrafish), this protein is Protein FAM167A (fam167a).